The primary structure comprises 207 residues: UPF0319 protein VV1_2115 (207 aa).

Positions 1–18 (MLRVLGLAGMLMSFNIHA) are cleaved as a signal peptide.

Belongs to the UPF0319 family.

This chain is UPF0319 protein VV1_2115, found in Vibrio vulnificus (strain CMCP6).